Consider the following 86-residue polypeptide: Large ribosomal subunit protein bL31B (86 aa).

Belongs to the bacterial ribosomal protein bL31 family. Type B subfamily. As to quaternary structure, part of the 50S ribosomal subunit.

This is Large ribosomal subunit protein bL31B from Cupriavidus necator (strain ATCC 17699 / DSM 428 / KCTC 22496 / NCIMB 10442 / H16 / Stanier 337) (Ralstonia eutropha).